Here is a 234-residue protein sequence, read N- to C-terminus: Small ribosomal subunit protein uS3 (234 aa).

Positions 17-86 (VEKFLTKELK…SPQVEVQQVQ (70 aa)) constitute a KH type-2 domain.

This sequence belongs to the universal ribosomal protein uS3 family. In terms of assembly, part of the 30S ribosomal subunit.

Functionally, binds the lower part of the 30S subunit head. In Methanoculleus marisnigri (strain ATCC 35101 / DSM 1498 / JR1), this protein is Small ribosomal subunit protein uS3.